The chain runs to 235 residues: Maximins-S type A (235 aa).

Residues 1–18 (MNFNYFILVLFFITSGHA) form the signal peptide. 2 consecutive propeptides follow at residues 19 to 35 (KSET…HIKR) and 52 to 65 (SAEE…LVKR). Asparagine 83 is subject to Asparagine amide. A propeptide spanning residues 87–100 (SAEEQDLAEDLVTR) is cleaved from the precursor. Asparagine 118 carries the post-translational modification Asparagine amide. Residues 122–135 (SAEEQDLAEDLVKR) constitute a propeptide that is removed on maturation. At asparagine 153 the chain carries Asparagine amide. Positions 157 to 170 (SAEEQDLAEDLVTR) are excised as a propeptide. Lysine amide is present on lysine 188. Residues 192 to 205 (SAEDQDLAEDLVTR) constitute a propeptide that is removed on maturation. Lysine 223 is subject to Lysine amide. The propeptide occupies 227–235 (SAEQEKDMK).

The protein belongs to the maximin-S family. In terms of tissue distribution, expressed by the skin dorsal glands.

It localises to the secreted. Functionally, maximin-S1 has no antimicrobial activity. Has no hemolytic activity. Its function is as follows. Maximin-S2 has an activity against mycoplasma but has no activity against common Gram-positive and Gram-negative bacteria nor fungi. Has no hemolytic activity. In terms of biological role, maximin-S3 has an activity against mycoplasma but has no activity against common Gram-positive and Gram-negative bacteria nor fungi. Has no hemolytic activity. Maximin-S4 has an activity against mycoplasma but has no activity against common Gram-positive and Gram-negative bacteria nor fungi. Has no hemolytic activity. Functionally, maximin-S5 has an activity against mycoplasma but has no activity against common Gram-positive and Gram-negative bacteria nor fungi. Has no hemolytic activity. The chain is Maximins-S type A from Bombina maxima (Giant fire-bellied toad).